Consider the following 62-residue polypeptide: UPF0434 protein ASA_1553 (62 aa).

The protein belongs to the UPF0434 family.

The chain is UPF0434 protein ASA_1553 from Aeromonas salmonicida (strain A449).